The primary structure comprises 120 residues: Large ribosomal subunit protein uL24 (120 aa).

It belongs to the universal ribosomal protein uL24 family. Part of the 50S ribosomal subunit.

Its function is as follows. One of two assembly initiator proteins, it binds directly to the 5'-end of the 23S rRNA, where it nucleates assembly of the 50S subunit. In terms of biological role, one of the proteins that surrounds the polypeptide exit tunnel on the outside of the subunit. The protein is Large ribosomal subunit protein uL24 of Pseudarthrobacter chlorophenolicus (strain ATCC 700700 / DSM 12829 / CIP 107037 / JCM 12360 / KCTC 9906 / NCIMB 13794 / A6) (Arthrobacter chlorophenolicus).